Consider the following 235-residue polypeptide: MKKGNMIYEGKAKKIFATDNPDLVIQEFKDDASAFNALKKGTILGKGVVNNEVSCHLFSHLAGLGIENHFVEKLSEREMLCKKLEIIKAEVVMRNIAAGSLVKRYGLQEAQVLPFPIAELYLKDDALGDPLMNDAHAVAMGIASAEEIQFVKQEASKVNAALQVFFLERGLKLVDFKLEFGRHNGKILLGDEISPDTCRLWDAETMKKLDKDRFRFDLGDVEEAYIEVRHRVLGN.

It belongs to the SAICAR synthetase family.

It catalyses the reaction 5-amino-1-(5-phospho-D-ribosyl)imidazole-4-carboxylate + L-aspartate + ATP = (2S)-2-[5-amino-1-(5-phospho-beta-D-ribosyl)imidazole-4-carboxamido]succinate + ADP + phosphate + 2 H(+). It functions in the pathway purine metabolism; IMP biosynthesis via de novo pathway; 5-amino-1-(5-phospho-D-ribosyl)imidazole-4-carboxamide from 5-amino-1-(5-phospho-D-ribosyl)imidazole-4-carboxylate: step 1/2. The sequence is that of Phosphoribosylaminoimidazole-succinocarboxamide synthase from Chloroherpeton thalassium (strain ATCC 35110 / GB-78).